A 1481-amino-acid chain; its full sequence is Cystic fibrosis transmembrane conductance regulator (1481 aa).

The Cytoplasmic segment spans residues 1–77 (MQRSPLEKAS…KLINALRRCF (77 aa)). Residues 78 to 98 (FWRFTFYGILLYLGEVTKAVQ) form a helical membrane-spanning segment. The ABC transmembrane type-1 1 domain maps to 81–365 (FTFYGILLYL…WAVQTWYDSL (285 aa)). The Extracellular segment spans residues 99-122 (PLLLGRIIASYDPDNKTERSIAIY). Residues 123 to 146 (LGIGLCLLFIVRTLLLHPAIFGLH) form a helical membrane-spanning segment. Over 147-195 (HIGMQMRIAMFSLIYKKTLKLSSRVLDKISIGQLVSLLSNNLNKFDEGL) the chain is Cytoplasmic. Residues 196–216 (ALAHFVWIAPLQVALLMGLIW) traverse the membrane as a helical segment. Over 217-222 (ELLQAS) the chain is Extracellular. A helical membrane pass occupies residues 223-243 (AFCGLGFLIVLALFQAGLGRM). At 244–298 (MMKYRDQRAGKINERLVITSEMIENIQSVKAYCWEEAMEKMIENLRQTELKLTRK) the chain is on the cytoplasmic side. A helical transmembrane segment spans residues 299–319 (AAYVRYFNSSAFFFSGFFVVF). Over 320–339 (LSVLPYALIKGIILRKIFTT) the chain is Extracellular. Residues 340-358 (ISFCIVLRMAVTRQFPWAV) traverse the membrane as a helical segment. The Cytoplasmic segment spans residues 359–858 (QTWYDSLGAI…YLRYITLHKS (500 aa)). ATP-binding positions include tryptophan 401, serine 434, 458–465 (GSTGAGKT), and glutamine 493. The 224-residue stretch at 423-646 (NDDNNLFFSN…RPDFSSKLMG (224 aa)) folds into the ABC transporter 1 domain. The S-palmitoyl cysteine moiety is linked to residue cysteine 524. A phosphoserine mark is found at serine 549 and serine 660. Residues 654–831 (SSERRNSILT…EEINEEDLKE (178 aa)) are disordered R region. At serine 670 the chain carries Phosphoserine; by PKA. Position 686 is a phosphoserine (serine 686). Lysine 688 is covalently cross-linked (Glycyl lysine isopeptide (Lys-Gly) (interchain with G-Cter in ubiquitin)). Phosphoserine occurs at positions 700 and 712. A Phosphothreonine modification is found at threonine 717. Phosphoserine is present on residues serine 737, serine 753, serine 768, serine 790, serine 795, and serine 813. The helical transmembrane segment at 859–879 (LIFVLIWCLVIFLAEVAASLV) threads the bilayer. Residues 859-1155 (LIFVLIWCLV…AVNSSIDVDS (297 aa)) form the ABC transmembrane type-1 2 domain. The Extracellular portion of the chain corresponds to 880–918 (VLWLLRNTPFQDKGNSTYSRNNSYAVIITNTSSYYVFYI). N-linked (GlcNAc...) asparagine glycosylation is found at asparagine 894, asparagine 900, and asparagine 909. The discontinuously helical transmembrane segment at 919 to 939 (YVGVADTLLALGFFRGLPLVH) threads the bilayer. Topologically, residues 940-990 (TLITVSKILHHKMLHSVLQAPMSTLNTLKAGGILNRFSKDIAILDDLLPLT) are cytoplasmic. Residues 991-1011 (IFDFIQLLLIVIGAIAVVSVL) traverse the membrane as a helical segment. Residues 1012–1013 (QP) lie on the Extracellular side of the membrane. A helical transmembrane segment spans residues 1014 to 1034 (YIFLATVPVIAAFVLLRAYFL). The Cytoplasmic portion of the chain corresponds to 1035–1095 (QTSQQLKQLE…TANWFLYLST (61 aa)). The helical transmembrane segment at 1096 to 1116 (LRWFQMRIEMIFVIFFIAVTF) threads the bilayer. At 1117–1130 (ISILTTGEGEGTVG) the chain is on the extracellular side. A helical membrane pass occupies residues 1131–1151 (IILTLAMNIMSTLQWAVNSSI). At 1152-1481 (DVDSLMRSVS…TEEEVQETRL (330 aa)) the chain is on the cytoplasmic side. The 234-residue stretch at 1211-1444 (MTIKDLTAKY…KSLFRQAISH (234 aa)) folds into the ABC transporter 2 domain. Residues tyrosine 1220 and 1245 to 1252 (GRTGSGKS) contribute to the ATP site. The interaction with GORASP2 stretch occupies residues 1387-1481 (RALKQAFADC…TEEEVQETRL (95 aa)). Cysteine 1396 is lipidated: S-palmitoyl cysteine. Phosphoserine occurs at positions 1445 and 1457. Residues 1453 to 1481 (HRNSSKYKSRPQIASLKEETEEEVQETRL) form a disordered region. The segment covering 1471–1481 (ETEEEVQETRL) has biased composition (acidic residues). The PDZ-binding signature appears at 1479 to 1481 (TRL).

Belongs to the ABC transporter superfamily. ABCC family. CFTR transporter (TC 3.A.1.202) subfamily. In terms of assembly, monomer; does not require oligomerization for channel activity. May form oligomers in the membrane. Interacts with SLC26A3, SLC26A6 and NHERF1. Interacts with SHANK2. Interacts with MYO6. Interacts (via C-terminus) with GOPC (via PDZ domain); this promotes CFTR internalization and thereby decreases channel activity. Interacts with SLC4A7 through NHERF1. Found in a complex with MYO5B and RAB11A. Interacts with ANO1. Interacts with SLC26A8. Interacts with AHCYL1; the interaction increases CFTR activity. Interacts with CSE1L. The core-glycosylated form interacts with GORASP2 (via PDZ GRASP-type 1 domain) in respone to ER stress. Interacts with MARCHF2; the interaction leads to CFTR ubiqtuitination and degradation. Interacts with ADGRG2. N-glycosylated. In terms of processing, phosphorylated; cAMP treatment promotes phosphorylation and activates the channel. Dephosphorylation decreases the ATPase activity (in vitro). Phosphorylation at PKA sites activates the channel. Phosphorylation at PKC sites enhances the response to phosphorylation by PKA. Phosphorylated by AMPK; this inhibits channel activity. Post-translationally, ubiquitinated, leading to its degradation in the lysosome. Deubiquitination by USP10 in early endosomes enhances its endocytic recycling to the cell membrane. Ubiquitinated by RNF185 during ER stress. Ubiquitinated by MARCHF2.

Its subcellular location is the apical cell membrane. The protein resides in the early endosome membrane. It is found in the cell membrane. It localises to the recycling endosome membrane. The protein localises to the endoplasmic reticulum membrane. Its subcellular location is the nucleus. It catalyses the reaction ATP + H2O + closed Cl(-) channel = ADP + phosphate + open Cl(-) channel.. The catalysed reaction is chloride(in) = chloride(out). The enzyme catalyses hydrogencarbonate(in) = hydrogencarbonate(out). It carries out the reaction ATP + H2O = ADP + phosphate + H(+). In terms of biological role, epithelial ion channel that plays an important role in the regulation of epithelial ion and water transport and fluid homeostasis. Mediates the transport of chloride ions across the cell membrane. Possesses an intrinsic ATPase activity and utilizes ATP to gate its channel; the passive flow of anions through the channel is gated by cycles of ATP binding and hydrolysis by the ATP-binding domains. The ion channel is also permeable to HCO(3)(-); selectivity depends on the extracellular chloride concentration. Exerts its function also by modulating the activity of other ion channels and transporters. Contributes to the regulation of the pH and the ion content of the epithelial fluid layer. Modulates the activity of the epithelial sodium channel (ENaC) complex, in part by regulating the cell surface expression of the ENaC complex. May regulate bicarbonate secretion and salvage in epithelial cells by regulating the transporter SLC4A7. Can inhibit the chloride channel activity of ANO1. Plays a role in the chloride and bicarbonate homeostasis during sperm epididymal maturation and capacitation. This is Cystic fibrosis transmembrane conductance regulator from Callithrix jacchus (White-tufted-ear marmoset).